Reading from the N-terminus, the 322-residue chain is Mas-related G-protein coupled receptor member B5 (322 aa).

Over 1-34 (MGLTTPAWNINNTVVNGSNNTEHFSCVSKFNTLN) the chain is Extracellular. N-linked (GlcNAc...) asparagine glycosylation is found at N11, N16, and N19. The chain crosses the membrane as a helical span at residues 35-55 (FLTVIIAMFGLAGNAIVLWLL). Residues 56 to 70 (AFHLPRNAFSVYVCN) are Cytoplasmic-facing. Residues 71-91 (LACADFLQLCTQILGSLECFL) form a helical membrane-spanning segment. Over 92–98 (QLNRRHT) the chain is Extracellular. A helical membrane pass occupies residues 99 to 119 (FFLTVVFMFAYLAGLCMIAAI). Over 120–147 (SVERSLSVMWPIWYHCQRPRHTSSIMCA) the chain is Cytoplasmic. A helical membrane pass occupies residues 148-168 (LLWAFCLLLNFLLGEGCGLLF). At 169–172 (SDPK) the chain is on the extracellular side. The chain crosses the membrane as a helical span at residues 173-193 (YYFCITCALITTALIILLTVV). At 194–216 (PSVSSLALLVKMICGSHRIPVTR) the chain is on the cytoplasmic side. Residues 217-237 (FYVTIALTLVVFIFLGLPFGI) traverse the membrane as a helical segment. Residues 238-260 (YSSFLIMFKEFQSIFSYHVLEVT) lie on the Extracellular side of the membrane. Residues 261-281 (IFLSCVNSCANPIIYFLVGSI) form a helical membrane-spanning segment. Over 282–322 (RQHRLQWQSLKLLLQRAMQDTPEEDSGERVPSQRSGELESV) the chain is Cytoplasmic. The tract at residues 302–322 (TPEEDSGERVPSQRSGELESV) is disordered.

It belongs to the G-protein coupled receptor 1 family. Mas subfamily.

The protein localises to the membrane. In terms of biological role, orphan receptor. Probably involved in the function of nociceptive neurons. May regulate nociceptor function and/or development, including the sensation or modulation of pain. The protein is Mas-related G-protein coupled receptor member B5 (Mrgprb5) of Mus musculus (Mouse).